A 258-amino-acid chain; its full sequence is Acyl-[acyl-carrier-protein]--UDP-N-acetylglucosamine O-acyltransferase (258 aa).

This sequence belongs to the transferase hexapeptide repeat family. LpxA subfamily. Homotrimer.

It localises to the cytoplasm. The catalysed reaction is a (3R)-hydroxyacyl-[ACP] + UDP-N-acetyl-alpha-D-glucosamine = a UDP-3-O-[(3R)-3-hydroxyacyl]-N-acetyl-alpha-D-glucosamine + holo-[ACP]. Its pathway is glycolipid biosynthesis; lipid IV(A) biosynthesis; lipid IV(A) from (3R)-3-hydroxytetradecanoyl-[acyl-carrier-protein] and UDP-N-acetyl-alpha-D-glucosamine: step 1/6. Its function is as follows. Involved in the biosynthesis of lipid A, a phosphorylated glycolipid that anchors the lipopolysaccharide to the outer membrane of the cell. The protein is Acyl-[acyl-carrier-protein]--UDP-N-acetylglucosamine O-acyltransferase of Alkalilimnicola ehrlichii (strain ATCC BAA-1101 / DSM 17681 / MLHE-1).